The primary structure comprises 430 residues: Maltoporin (430 aa).

The signal sequence occupies residues 1 to 23 (MNNKKTLLAVAISGMMFATSAAA).

It belongs to the porin LamB (TC 1.B.3) family. In terms of assembly, homotrimer formed of three 18-stranded antiparallel beta-barrels, containing three independent channels.

The protein localises to the cell outer membrane. The catalysed reaction is beta-maltose(in) = beta-maltose(out). Involved in the transport of maltose and maltodextrins. The protein is Maltoporin of Actinobacillus succinogenes (strain ATCC 55618 / DSM 22257 / CCUG 43843 / 130Z).